Here is a 191-residue protein sequence, read N- to C-terminus: uncharacterized protein (191 aa).

Positions 1-23 (MKKTMSAITAAAAVTSCFTGFGA) are cleaved as a signal peptide.

This is an uncharacterized protein from Bacillus subtilis (strain 168).